The chain runs to 281 residues: Pantothenate synthetase (281 aa).

30–37 (MGNLHLGH) contributes to the ATP binding site. The Proton donor role is filled by histidine 37. A (R)-pantoate-binding site is contributed by glutamine 61. Glutamine 61 lines the beta-alanine pocket. 149–152 (GRKD) provides a ligand contact to ATP. Glutamine 155 is a binding site for (R)-pantoate. Residues isoleucine 178 and 186–189 (MSSR) contribute to the ATP site.

This sequence belongs to the pantothenate synthetase family. In terms of assembly, homodimer.

The protein localises to the cytoplasm. It catalyses the reaction (R)-pantoate + beta-alanine + ATP = (R)-pantothenate + AMP + diphosphate + H(+). It participates in cofactor biosynthesis; (R)-pantothenate biosynthesis; (R)-pantothenate from (R)-pantoate and beta-alanine: step 1/1. Its function is as follows. Catalyzes the condensation of pantoate with beta-alanine in an ATP-dependent reaction via a pantoyl-adenylate intermediate. This chain is Pantothenate synthetase, found in Shewanella sediminis (strain HAW-EB3).